A 252-amino-acid chain; its full sequence is 2-succinyl-6-hydroxy-2,4-cyclohexadiene-1-carboxylate synthase (252 aa).

The protein belongs to the AB hydrolase superfamily. MenH family. As to quaternary structure, monomer.

It carries out the reaction 5-enolpyruvoyl-6-hydroxy-2-succinyl-cyclohex-3-ene-1-carboxylate = (1R,6R)-6-hydroxy-2-succinyl-cyclohexa-2,4-diene-1-carboxylate + pyruvate. It participates in quinol/quinone metabolism; 1,4-dihydroxy-2-naphthoate biosynthesis; 1,4-dihydroxy-2-naphthoate from chorismate: step 3/7. Its pathway is quinol/quinone metabolism; menaquinone biosynthesis. Catalyzes a proton abstraction reaction that results in 2,5-elimination of pyruvate from 2-succinyl-5-enolpyruvyl-6-hydroxy-3-cyclohexene-1-carboxylate (SEPHCHC) and the formation of 2-succinyl-6-hydroxy-2,4-cyclohexadiene-1-carboxylate (SHCHC). This Salmonella schwarzengrund (strain CVM19633) protein is 2-succinyl-6-hydroxy-2,4-cyclohexadiene-1-carboxylate synthase.